Here is a 161-residue protein sequence, read N- to C-terminus: 2-C-methyl-D-erythritol 2,4-cyclodiphosphate synthase (161 aa).

2 residues coordinate a divalent metal cation: D9 and H11. 4-CDP-2-C-methyl-D-erythritol 2-phosphate is bound by residues D9–H11 and H37–S38. H45 contacts a divalent metal cation. 4-CDP-2-C-methyl-D-erythritol 2-phosphate-binding positions include D59 to G61, F64 to D68, T135 to E138, and R145.

It belongs to the IspF family. In terms of assembly, homotrimer. A divalent metal cation is required as a cofactor.

The catalysed reaction is 4-CDP-2-C-methyl-D-erythritol 2-phosphate = 2-C-methyl-D-erythritol 2,4-cyclic diphosphate + CMP. The protein operates within isoprenoid biosynthesis; isopentenyl diphosphate biosynthesis via DXP pathway; isopentenyl diphosphate from 1-deoxy-D-xylulose 5-phosphate: step 4/6. Involved in the biosynthesis of isopentenyl diphosphate (IPP) and dimethylallyl diphosphate (DMAPP), two major building blocks of isoprenoid compounds. Catalyzes the conversion of 4-diphosphocytidyl-2-C-methyl-D-erythritol 2-phosphate (CDP-ME2P) to 2-C-methyl-D-erythritol 2,4-cyclodiphosphate (ME-CPP) with a corresponding release of cytidine 5-monophosphate (CMP). In Leptospira interrogans serogroup Icterohaemorrhagiae serovar copenhageni (strain Fiocruz L1-130), this protein is 2-C-methyl-D-erythritol 2,4-cyclodiphosphate synthase.